Here is a 342-residue protein sequence, read N- to C-terminus: Surface presentation of antigens protein SpaS (342 aa).

Helical transmembrane passes span 28–48 (LTTV…FSLS), 70–90 (FFAV…FCVL), 133–153 (EFFK…FFWI), 158–178 (IIFS…GRLF), 181–201 (IILF…VIEF), and 260–280 (HIAI…ISLI).

It belongs to the type III secretion exporter family.

It localises to the cell inner membrane. Its function is as follows. Required for surface presentation of invasion plasmid antigens. Could play a role in preserving the translocation competence of the ipa antigens. Required for invasion and for secretion of the three ipa proteins. This is Surface presentation of antigens protein SpaS (spaS) from Shigella flexneri.